The chain runs to 265 residues: 4-hydroxy-tetrahydrodipicolinate reductase (265 aa).

NAD(+) contacts are provided by residues 7-12 (GASGRM) and D33. R34 lines the NADP(+) pocket. NAD(+) contacts are provided by residues 96 to 98 (GTT) and 120 to 123 (AANM). H153 functions as the Proton donor/acceptor in the catalytic mechanism. A (S)-2,3,4,5-tetrahydrodipicolinate-binding site is contributed by H154. The active-site Proton donor is K157. Residue 163–164 (GT) participates in (S)-2,3,4,5-tetrahydrodipicolinate binding.

The protein belongs to the DapB family.

It is found in the cytoplasm. The enzyme catalyses (S)-2,3,4,5-tetrahydrodipicolinate + NAD(+) + H2O = (2S,4S)-4-hydroxy-2,3,4,5-tetrahydrodipicolinate + NADH + H(+). The catalysed reaction is (S)-2,3,4,5-tetrahydrodipicolinate + NADP(+) + H2O = (2S,4S)-4-hydroxy-2,3,4,5-tetrahydrodipicolinate + NADPH + H(+). It functions in the pathway amino-acid biosynthesis; L-lysine biosynthesis via DAP pathway; (S)-tetrahydrodipicolinate from L-aspartate: step 4/4. Functionally, catalyzes the conversion of 4-hydroxy-tetrahydrodipicolinate (HTPA) to tetrahydrodipicolinate. This Burkholderia lata (strain ATCC 17760 / DSM 23089 / LMG 22485 / NCIMB 9086 / R18194 / 383) protein is 4-hydroxy-tetrahydrodipicolinate reductase.